An 865-amino-acid polypeptide reads, in one-letter code: TATA box-binding protein-associated factor RNA polymerase I subunit B (865 aa).

The RRN7-type zinc-finger motif lies at 1–33 (MHSAKNEKCNACGGYRFSVNDGFKYCDRCGALF). Residues Cys-9, Cys-12, Cys-26, and Cys-29 each coordinate Zn(2+). The segment at 35–99 (NFEELEEEEG…DFLQQQAIKG (65 aa)) is B-reader. A B-linker region spans residues 100 to 111 (EELELPHDATPD). An N-terminal cyclin fold region spans residues 112–348 (YLYRLALRLF…SQPERMKQGE (237 aa)). Residues 233–261 (DEDGDQDAQGGQQLDDLTLETTQNPDESI) form a disordered region. A compositionally biased stretch (low complexity) spans 239-248 (DAQGGQQLDD). The segment covering 252–261 (ETTQNPDESI) has biased composition (polar residues). The interval 349 to 496 (VVKPTIVDYA…LLTLRLTFQL (148 aa)) is C-terminal cyclin fold.

This sequence belongs to the RRN7/TAF1B family.

It is found in the nucleus. The protein resides in the nucleolus. Component of RNA polymerase I core factor complex that acts as a GTF2B/TFIIB-like factor and plays a key role in multiple steps during transcription initiation such as pre-initiation complex (PIC) assembly and postpolymerase recruitment events in polymerase I (Pol I) transcription. Binds rDNA promoters and plays a role in Pol I recruitment. The protein is TATA box-binding protein-associated factor RNA polymerase I subunit B of Caenorhabditis elegans.